A 185-amino-acid polypeptide reads, in one-letter code: NEDD8-conjugating enzyme UBE2F (185 aa).

The tract at residues 1–21 (MLTLASKLKRDDGVKGSRTTS) is disordered. The segment at 1–29 (MLTLASKLKRDDGVKGSRTTSTTLDSMRR) is interaction with uba3. A UBC core domain is found at 32–185 (VRDRLLVKEV…VEDYIKRYAR (154 aa)). The active-site Glycyl thioester intermediate is C116.

The protein belongs to the ubiquitin-conjugating enzyme family. UBE2F subfamily.

It catalyses the reaction [E1 NEDD8-activating enzyme]-S-[NEDD8 protein]-yl-L-cysteine + [E2 NEDD8-conjugating enzyme]-L-cysteine = [E1 NEDD8-activating enzyme]-L-cysteine + [E2 NEDD8-conjugating enzyme]-S-[NEDD8-protein]-yl-L-cysteine.. Its pathway is protein modification; protein neddylation. In terms of biological role, accepts the ubiquitin-like protein NEDD8 from the UBA3-NAE1 E1 complex and catalyzes its covalent attachment to other proteins. Together with the E3 ubiquitin ligase rnf7/rbx2, specifically neddylates cullin-5 (cul5). Does not neddylate cul1, cul2, cul3, cul4a or cul4b. The polypeptide is NEDD8-conjugating enzyme UBE2F (ube2f) (Xenopus laevis (African clawed frog)).